The following is a 172-amino-acid chain: Acidic proline-rich protein PRP25 (172 aa).

Positions 1–16 are cleaved as a signal peptide; that stretch reads MLVVLFTAVLLTLSYA. Positions 22 to 172 are disordered; it reads ELQILDQTPN…QQGPPPPGGP (151 aa). The segment covering 32 to 44 has biased composition (pro residues); it reads QKPPPPGFPPRPP. Over residues 57-67 the composition is skewed to low complexity; it reads GPQQSPLQPGK. 2 stretches are compositionally biased toward pro residues: residues 68–137 and 145–172; these read PQDP…PQQK and QGPP…PGGP.

It is found in the secreted. This Rattus norvegicus (Rat) protein is Acidic proline-rich protein PRP25.